A 155-amino-acid polypeptide reads, in one-letter code: MNPTQQHLADRVSGLTEEVIVGTDYFLVDVEVRGHKGTRVVEVYIDSEEEVGHDDLALISKEIGFLLDVEDVVDGSYKLELSSPGIKRPLTMPAQYRKNVGRTLRVRFESDGDEEIVVGDLTDADDEEIELELPSAERLQLPYTTITQARIELPW.

The protein belongs to the RimP family.

Its subcellular location is the cytoplasm. Required for maturation of 30S ribosomal subunits. This Salinibacter ruber (strain DSM 13855 / M31) protein is Ribosome maturation factor RimP.